The primary structure comprises 169 residues: Short form salivary protein D7R3 (169 aa).

The N-terminal stretch at 1-21 (MFGKLLPCAILVWCLFSLGQA) is a signal peptide. 3 cysteine pairs are disulfide-bonded: cysteine 30-cysteine 62, cysteine 43-cysteine 168, and cysteine 101-cysteine 120. Noradrenaline contacts are provided by glutamate 31 and arginine 46. Glutamate 31 serves as a coordination point for serotonin. Residues histidine 59, tyrosine 118, aspartate 135, and glutamate 138 each contribute to the serotonin site. Histamine-binding residues include tyrosine 118, aspartate 135, and glutamate 138. 2 residues coordinate noradrenaline: aspartate 135 and glutamate 138.

Belongs to the PBP/GOBP family. Female saliva (at protein level). Female salivary gland. Low-level expression in female carcass without salivary glands. Not detected in male tissues.

It localises to the secreted. Its function is as follows. Modulates blood feeding of female mosquitoes on vertebrate species by binding and sequestering different mediators involved in the host response. Binds serotonin, noradrenaline, histamine and adrenaline. Inhibits histamine-, serotonin- and noradrenaline-induced smooth muscle contraction. Exhibits vasodilating activity. This chain is Short form salivary protein D7R3, found in Anopheles gambiae (African malaria mosquito).